The following is a 253-amino-acid chain: GTP cyclohydrolase III (253 aa).

The protein belongs to the archaeal-type GTP cyclohydrolase family.

It carries out the reaction GTP + 3 H2O = 2-amino-5-formylamino-6-(5-phospho-D-ribosylamino)pyrimidin-4(3H)-one + 2 phosphate + 2 H(+). Functionally, catalyzes the formation of 2-amino-5-formylamino-6-ribofuranosylamino-4(3H)-pyrimidinone ribonucleotide monophosphate and inorganic phosphate from GTP. Also has an independent pyrophosphate phosphohydrolase activity. The polypeptide is GTP cyclohydrolase III (Natronomonas pharaonis (strain ATCC 35678 / DSM 2160 / CIP 103997 / JCM 8858 / NBRC 14720 / NCIMB 2260 / Gabara) (Halobacterium pharaonis)).